Here is a 427-residue protein sequence, read N- to C-terminus: UPF0229 protein YeaH (427 aa).

A compositionally biased stretch (basic and acidic residues) spans 79 to 90 (NDHFVQNDRIER). Residues 79–110 (NDHFVQNDRIERPQGGGGGSGSGQGQASQDGE) are disordered. Gly residues predominate over residues 92 to 102 (QGGGGGSGSGQ).

It belongs to the UPF0229 family.

The sequence is that of UPF0229 protein YeaH from Escherichia coli O9:H4 (strain HS).